Consider the following 481-residue polypeptide: Probable zeta-carotene desaturase (481 aa).

The protein belongs to the zeta carotene desaturase family. Requires decylplastoquinone as cofactor. 6-decylubiquinone serves as cofactor.

The catalysed reaction is 9,9'-di-cis-zeta-carotene + 2 a quinone = 7,7',9,9'-tetra-cis-lycopene + 2 a quinol. It participates in carotenoid biosynthesis; lycopene biosynthesis. In terms of biological role, catalyzes the conversion of zeta-carotene to lycopene via the intermediary of neurosporene. It carries out two consecutive desaturations (introduction of double bonds) at positions C-7 and C-7'. The sequence is that of Probable zeta-carotene desaturase (zds) from Synechococcus elongatus (strain ATCC 33912 / PCC 7942 / FACHB-805) (Anacystis nidulans R2).